Consider the following 66-residue polypeptide: Large ribosomal subunit protein eL24 (66 aa).

Residues Cys-7, Cys-10, Cys-33, and Cys-37 each contribute to the Zn(2+) site. Residues 7 to 37 (CSYCGKPFEPGTGKMYVRNDGRVLFFCSRKC) form a C4-type zinc finger.

Belongs to the eukaryotic ribosomal protein eL24 family. As to quaternary structure, part of the 50S ribosomal subunit. Forms a cluster with proteins L3 and L14. The cofactor is Zn(2+).

Its function is as follows. Binds to the 23S rRNA. This Pyrococcus furiosus (strain ATCC 43587 / DSM 3638 / JCM 8422 / Vc1) protein is Large ribosomal subunit protein eL24.